The sequence spans 593 residues: ATP-dependent lipid A-core flippase (593 aa).

Helical transmembrane passes span 33-53, 75-95, 137-157, 164-184, 262-282, and 292-312; these read IGIV…EAGI, WYVP…QYTS, AIVF…VTLV, IFLL…VAVI, QPLT…IAVV, and GGFV…KHLI. The 284-residue stretch at 37–320 folds into the ABC transmembrane type-1 domain; the sequence is VLAVVTMGVV…LIDVNQPLQR (284 aa). The region spanning 352–586 is the ABC transporter domain; the sequence is IEFRAVSFDY…GGLYAHLHRI (235 aa). 386 to 393 serves as a coordination point for ATP; sequence GPSGSGKT.

Belongs to the ABC transporter superfamily. Lipid exporter (TC 3.A.1.106) family. As to quaternary structure, homodimer.

The protein resides in the cell inner membrane. The enzyme catalyses ATP + H2O + lipid A-core oligosaccharideSide 1 = ADP + phosphate + lipid A-core oligosaccharideSide 2.. Its function is as follows. Involved in lipopolysaccharide (LPS) biosynthesis. Translocates lipid A-core from the inner to the outer leaflet of the inner membrane. Transmembrane domains (TMD) form a pore in the inner membrane and the ATP-binding domain (NBD) is responsible for energy generation. The protein is ATP-dependent lipid A-core flippase of Burkholderia orbicola (strain AU 1054).